Consider the following 404-residue polypeptide: Cytochrome P450 monooxygenase avaI (404 aa).

Position 382 (cysteine 382) interacts with heme.

Belongs to the cytochrome P450 family. Heme is required as a cofactor.

The protein operates within secondary metabolite biosynthesis. Its function is as follows. Cytochrome P450 monooxygenase; part of the cluster that mediates the biosynthesis of a highly modified cyclo-arginine-tryptophan dipeptide (cRW). The first step of the pathway is perfornmed by the arginine-containing cyclodipeptide synthase (RCPDS) avaA that acts as the scaffold-generating enzyme and is responsible for formation of the cyclo-Arg-Trp (cRW) diketopiperazine. AvaB then acts as a multifunctional flavoenzyme that is responsible for generating the cyclo-Arg-formylkynurenine DKP, which can be deformylated by avaC. AvaB then further catalyzes an additional N-oxidation followed by cyclization and dehydration. The next step is an N-acetylation of the guanidine group catalyzed by the arginine N-acetyltransferase avaD. The roles of the additional enzymes identified within the ava cluster still have to be determined. This is Cytochrome P450 monooxygenase avaI from Aspergillus versicolor.